The chain runs to 297 residues: Nucleotide-binding protein CJA_2809 (297 aa).

8–15 (GLSGSGKT) contributes to the ATP binding site. 59 to 62 (DVRN) provides a ligand contact to GTP.

The protein belongs to the RapZ-like family.

In terms of biological role, displays ATPase and GTPase activities. This is Nucleotide-binding protein CJA_2809 from Cellvibrio japonicus (strain Ueda107) (Pseudomonas fluorescens subsp. cellulosa).